We begin with the raw amino-acid sequence, 572 residues long: Phosphoenolpyruvate-protein phosphotransferase (572 aa).

His190 serves as the catalytic Tele-phosphohistidine intermediate. Phosphoenolpyruvate is bound by residues Arg297 and Arg333. The Mg(2+) site is built by Glu432 and Asp456. Phosphoenolpyruvate is bound by residues 455–456 and Arg466; that span reads ND. Cys503 functions as the Proton donor in the catalytic mechanism.

This sequence belongs to the PEP-utilizing enzyme family. As to quaternary structure, homodimer. The cofactor is Mg(2+).

The protein localises to the cytoplasm. It carries out the reaction L-histidyl-[protein] + phosphoenolpyruvate = N(pros)-phospho-L-histidyl-[protein] + pyruvate. In terms of biological role, general (non sugar-specific) component of the phosphoenolpyruvate-dependent sugar phosphotransferase system (sugar PTS). This major carbohydrate active-transport system catalyzes the phosphorylation of incoming sugar substrates concomitantly with their translocation across the cell membrane. Enzyme I transfers the phosphoryl group from phosphoenolpyruvate (PEP) to the phosphoryl carrier protein (HPr). In Listeria monocytogenes serovar 1/2a (strain ATCC BAA-679 / EGD-e), this protein is Phosphoenolpyruvate-protein phosphotransferase (ptsI).